The chain runs to 479 residues: Probable cytosol aminopeptidase (479 aa).

The Mn(2+) site is built by Lys-251 and Asp-256. Lys-263 is a catalytic residue. Residues Asp-274, Asp-333, and Glu-335 each coordinate Mn(2+). Arg-337 is a catalytic residue.

This sequence belongs to the peptidase M17 family. It depends on Mn(2+) as a cofactor.

It localises to the cytoplasm. The catalysed reaction is Release of an N-terminal amino acid, Xaa-|-Yaa-, in which Xaa is preferably Leu, but may be other amino acids including Pro although not Arg or Lys, and Yaa may be Pro. Amino acid amides and methyl esters are also readily hydrolyzed, but rates on arylamides are exceedingly low.. The enzyme catalyses Release of an N-terminal amino acid, preferentially leucine, but not glutamic or aspartic acids.. In terms of biological role, presumably involved in the processing and regular turnover of intracellular proteins. Catalyzes the removal of unsubstituted N-terminal amino acids from various peptides. The polypeptide is Probable cytosol aminopeptidase (Albidiferax ferrireducens (strain ATCC BAA-621 / DSM 15236 / T118) (Rhodoferax ferrireducens)).